The following is a 508-amino-acid chain: Aspartic proteinase A3 (508 aa).

The signal sequence occupies residues 1–25; the sequence is MGTRFQSFLLVFLLSCLILISTASC. Positions 26–69 are cleaved as a propeptide — activation peptide; it reads ERNGDGTIRIGLKKRKLDRSNRLASQLFLKNRGSHWSPKHYFRL. Residues 87-505 enclose the Peptidase A1 domain; it reads YYGDITIGTP…DYGKGRVGFA (419 aa). Asp-105 is an active-site residue. Disulfide bonds link Cys-118-Cys-124 and Cys-283-Cys-287. Asp-292 is a catalytic residue. Residues 317 to 419 enclose the Saposin B-type domain; sequence IVSRECKAVV…AELCDHIPTQ (103 aa). 4 disulfides stabilise this stretch: Cys-322-Cys-413, Cys-347-Cys-385, Cys-353-Cys-382, and Cys-427-Cys-464. N-linked (GlcNAc...) asparagine glycosylation occurs at Asn-399.

It belongs to the peptidase A1 family. As to expression, expressed in petals, carpels and seed pods.

Its subcellular location is the secreted. Functionally, involved in the processing and degradation of storage proteins. In Arabidopsis thaliana (Mouse-ear cress), this protein is Aspartic proteinase A3 (APA3).